The sequence spans 458 residues: UDP-N-acetylmuramate--L-alanine ligase (458 aa).

Residue Gly115–Thr121 participates in ATP binding.

The protein belongs to the MurCDEF family.

The protein localises to the cytoplasm. The catalysed reaction is UDP-N-acetyl-alpha-D-muramate + L-alanine + ATP = UDP-N-acetyl-alpha-D-muramoyl-L-alanine + ADP + phosphate + H(+). Its pathway is cell wall biogenesis; peptidoglycan biosynthesis. Its function is as follows. Cell wall formation. This is UDP-N-acetylmuramate--L-alanine ligase from Anaeromyxobacter sp. (strain Fw109-5).